The chain runs to 163 residues: Auxin-responsive protein IAA5 (163 aa).

Residues 15-19 carry the EAR-like (transcriptional repression) motif; sequence LRLGL. A PB1 domain is found at 74-160; that stretch reads SSYVKVSVDG…KRLRIMKRSC (87 aa).

It belongs to the Aux/IAA family. In terms of assembly, homodimers and heterodimers. In terms of tissue distribution, highly expressed in stems and flowers.

The protein localises to the nucleus. Aux/IAA proteins are short-lived transcriptional factors that function as repressors of early auxin response genes at low auxin concentrations. Repression is thought to result from the interaction with auxin response factors (ARFs), proteins that bind to the auxin-responsive promoter element (AuxRE). Formation of heterodimers with ARF proteins may alter their ability to modulate early auxin response genes expression. The sequence is that of Auxin-responsive protein IAA5 (IAA5) from Arabidopsis thaliana (Mouse-ear cress).